The sequence spans 9518 residues: Nonribosomal peptide synthetase ungA' (9518 aa).

Residues 214–611 (ERARETPNAP…ARKDDQVKVR (398 aa)) form an adenylation 1 region. The region spanning 738–814 (APRTEMEWRL…DLAEVARLEQ (77 aa)) is the Carrier 1 domain. An O-(pantetheine 4'-phosphoryl)serine modification is found at serine 775. The condensation 1 stretch occupies residues 853–1250 (DLLPCSPLQE…EEVLRQISRE (398 aa)). The tract at residues 1292–1695 (QRVQEQPDRP…GRKDTQVKIR (404 aa)) is adenylation 2. The Carrier 2 domain occupies 1822–1898 (LPQTELERRL…RLAHCSQTEQ (77 aa)). Serine 1859 carries the post-translational modification O-(pantetheine 4'-phosphoryl)serine. An epimerization 1 region spans residues 1911-2336 (TFALSPIQQL…QRSLEVVAKE (426 aa)). A condensation 2 region spans residues 2376–2803 (EDIYPCSPVQ…DNLQIASSQD (428 aa)). An adenylation 3 region spans residues 2829-3224 (RIQQQPEAPA…NRKDNQVKIR (396 aa)). The Carrier 3 domain maps to 3352 to 3428 (APATASEQRL…DMAQTLKVES (77 aa)). Serine 3389 is subject to O-(pantetheine 4'-phosphoryl)serine. The interval 3465 to 3869 (EDVLPCTPLQ…QVCKEASQYL (405 aa)) is condensation 3. The tract at residues 3906 to 4307 (QQAHQRPNAS…GRRDAQVKIR (402 aa)) is adenylation 4. One can recognise a Carrier 4 domain in the interval 4436–4512 (TPTTITECRI…RLAACTTPVD (77 aa)). Residue serine 4473 is modified to O-(pantetheine 4'-phosphoryl)serine. The epimerization 2 stretch occupies residues 4527 to 4954 (ALSPIQQLFV…EDAAQELPSL (428 aa)). The condensation 4 stretch occupies residues 4990–5411 (VEDIYPCSPI…ANLISKEDLR (422 aa)). The tract at residues 5433–5829 (SEQAQNQPDA…GRKDGQVKIR (397 aa)) is adenylation 5. The Carrier 5 domain maps to 5957 to 6033 (VASSPVELAL…QLAKNSGLQA (77 aa)). Serine 5994 bears the O-(pantetheine 4'-phosphoryl)serine mark. The tract at residues 6050–6470 (ELSPIQRMFF…CEHSLVMAAH (421 aa)) is epimerization 3. The interval 6512–6856 (VEDIYPCTPI…TGISVQNNAS (345 aa)) is condensation 5. Positions 6947–7338 (LRPNSSAIHA…GRKDSQVKVR (392 aa)) are adenylation 6. The 77-residue stretch at 7464–7540 (LPRTEVEMQL…GLAPSAASQA (77 aa)) folds into the Carrier 6 domain. The residue at position 7501 (serine 7501) is an O-(pantetheine 4'-phosphoryl)serine. The tract at residues 7555-7978 (ELSPIQQMFI…LQTAARELPH (424 aa)) is epimerization 4. Residues 8016-8444 (VEDIYPLTPI…QVDLAGRHDQ (429 aa)) form a condensation 6 region. The adenylation 7 stretch occupies residues 8468–8867 (MQCQQRPDAT…SRKDAQVKIR (400 aa)). A Carrier 7 domain is found at 8995–9071 (PLTTEMEWRL…DMAHYLREGQ (77 aa)). O-(pantetheine 4'-phosphoryl)serine is present on serine 9032. Residues 9111–9454 (DVYPTTELQD…DNLEHDAGTS (344 aa)) are condensation 7.

This sequence belongs to the NRP synthetase family.

The protein operates within secondary metabolite biosynthesis. Its function is as follows. Nonribosomal peptide synthetase; part of the gene cluster that mediates the biosynthesis of the unguisins, gamma-aminobutyric acid (GABA)-containing fungal cyclic heptapeptides with the amino acid sequence cyclo-(D-Ala1-D-Val2-L-Leu3-beta-MePhe4-D-Ala5-D-Trp6-GABA7) for unguisin H and cyclo-(D-Ala1-D-Ala2-L-Leu3-beta-MePhe4-D-Ala5-D-Trp6-GABA7) for unguisin I. UngA' is the main enzyme within the cluster which condenses the 7 residues using its respective 7 modules. The terminal condensation domain (Ct) is involved in cyclization with D-alanine and thereby releasing of unguisins H and I. The alanine racemase ungC' provides D-alanine, which is then accepted by the first adenylation domain of ungA', whereas the methyltransferase ungE' provides the (2R,3R)-beta-methylphenylalanine residue incorporated by the module 4. Finally, the hydrolase ungD' catalyzes the hydrolysis between the D-tryptophan and GABA residues of unguisins H and I to produce the corresponding linear peptides. The protein is Nonribosomal peptide synthetase ungA' of Aspergillus campestris (strain IBT 28561).